The chain runs to 150 residues: MQNSEFKYLIRVSRTDLDGNKKLIMALQDIYGVGEAMARAIVRVAKLDPNKLAGYLTEEEVKKIEEVLADPAKFGIPSWMFNRRKDYVTGEDKHVIESDLMIIKQEDINRLKRIRCYRGIRHELGLPCRGQRTKSTFRRGPTVGVSRRKK.

The disordered stretch occupies residues 131–150; that stretch reads QRTKSTFRRGPTVGVSRRKK.

It belongs to the universal ribosomal protein uS13 family. Part of the 30S ribosomal subunit. Forms a loose heterodimer with protein S19. Forms two bridges to the 50S subunit in the 70S ribosome.

Functionally, located at the top of the head of the 30S subunit, it contacts several helices of the 16S rRNA. In the 70S ribosome it contacts the 23S rRNA (bridge B1a) and protein L5 of the 50S subunit (bridge B1b), connecting the 2 subunits; these bridges are implicated in subunit movement. This chain is Small ribosomal subunit protein uS13, found in Methanocaldococcus jannaschii (strain ATCC 43067 / DSM 2661 / JAL-1 / JCM 10045 / NBRC 100440) (Methanococcus jannaschii).